The chain runs to 658 residues: Scarecrow-like protein 28 (658 aa).

Disordered stretches follow at residues 43 to 85 (PCSS…TSGC), 96 to 115 (LATT…NNNR), and 209 to 265 (PAAV…NNNR). The segment covering 214–228 (EASGGSSTSASSESR) has biased composition (low complexity). Residues 265 to 654 (RNDLQRDFEL…QPLYTISAWT (390 aa)) form the GRAS domain. Residues 272–336 (FELVNLLTGC…VARMWPHIFH (65 aa)) form a leucine repeat I (LRI) region. Residues 355–420 (LRFLNQVTPI…NPPHHVRITG (66 aa)) are VHIID. Positions 386-390 (VHIID) match the VHIID motif. Residues 430 to 462 (ETGDRLHGFAEAMNLQFEFHPVVDRLEDVRLWM) are leucine repeat II (LRII). The PFYRE stretch occupies residues 471 to 563 (VAVNCVMQMH…EMLFGREIRN (93 aa)). Residues 566-654 (ACEGSHRQER…QPLYTISAWT (89 aa)) are SAW.

The protein belongs to the GRAS family. As to quaternary structure, interacts with SNRNP35 and CYP95. In terms of tissue distribution, expressed in roots and sepals.

The protein resides in the nucleus. Probable transcription factor involved in plant development. The sequence is that of Scarecrow-like protein 28 (SCL28) from Arabidopsis thaliana (Mouse-ear cress).